A 95-amino-acid chain; its full sequence is Protein TusB (95 aa).

This sequence belongs to the DsrH/TusB family. Heterohexamer, formed by a dimer of trimers. The hexameric TusBCD complex contains 2 copies each of TusB, TusC and TusD. The TusBCD complex interacts with TusE.

The protein resides in the cytoplasm. In terms of biological role, part of a sulfur-relay system required for 2-thiolation of 5-methylaminomethyl-2-thiouridine (mnm(5)s(2)U) at tRNA wobble positions. This chain is Protein TusB, found in Pectobacterium parmentieri.